The following is a 245-amino-acid chain: Eukaryotic translation initiation factor 6-2 (245 aa).

It belongs to the eIF-6 family. Monomer. Associates with the 60S ribosomal subunit.

It localises to the cytoplasm. Its subcellular location is the nucleus. The protein localises to the nucleolus. Its function is as follows. Binds to the 60S ribosomal subunit and prevents its association with the 40S ribosomal subunit to form the 80S initiation complex in the cytoplasm. May also be involved in ribosome biogenesis. The sequence is that of Eukaryotic translation initiation factor 6-2 from Arabidopsis thaliana (Mouse-ear cress).